Reading from the N-terminus, the 61-residue chain is Temporin-CDYa (61 aa).

The signal sequence occupies residues 1-22 (MFPLKKSLLLLFFLGTINFSFC). Residues 23 to 44 (EEERNAEEERRDDPEERDVAME) constitute a propeptide that is removed on maturation. At leucine 59 the chain carries Leucine amide.

Belongs to the frog skin active peptide (FSAP) family. Temporin subfamily. As to expression, expressed by the skin glands.

Its subcellular location is the secreted. Its function is as follows. Antimicrobial peptide. In Rana dybowskii (Dybovsky's frog), this protein is Temporin-CDYa.